Here is a 73-residue protein sequence, read N- to C-terminus: Small ribosomal subunit protein bS18 (73 aa).

It belongs to the bacterial ribosomal protein bS18 family. In terms of assembly, part of the 30S ribosomal subunit. Forms a tight heterodimer with protein bS6.

Its function is as follows. Binds as a heterodimer with protein bS6 to the central domain of the 16S rRNA, where it helps stabilize the platform of the 30S subunit. In Prochlorococcus marinus (strain NATL2A), this protein is Small ribosomal subunit protein bS18.